An 89-amino-acid chain; its full sequence is Small ribosomal subunit protein uS15 (89 aa).

Belongs to the universal ribosomal protein uS15 family. Part of the 30S ribosomal subunit. Forms a bridge to the 50S subunit in the 70S ribosome, contacting the 23S rRNA.

Its function is as follows. One of the primary rRNA binding proteins, it binds directly to 16S rRNA where it helps nucleate assembly of the platform of the 30S subunit by binding and bridging several RNA helices of the 16S rRNA. Forms an intersubunit bridge (bridge B4) with the 23S rRNA of the 50S subunit in the ribosome. The sequence is that of Small ribosomal subunit protein uS15 from Prochlorococcus marinus (strain MIT 9515).